The primary structure comprises 265 residues: Undecaprenyl-diphosphatase (265 aa).

8 helical membrane passes run 15-37, 41-61, 85-105, 109-129, 144-164, 183-203, 218-238, and 244-264; these read GLTE…LLEY, KAES…VFLY, YLLA…HSFI, LFGP…ILAV, VSPA…WPGF, LAAE…TGYD, FWAV…KGFI, and VTFR…LLFW.

The protein belongs to the UppP family.

The protein resides in the cell inner membrane. It catalyses the reaction di-trans,octa-cis-undecaprenyl diphosphate + H2O = di-trans,octa-cis-undecaprenyl phosphate + phosphate + H(+). Its function is as follows. Catalyzes the dephosphorylation of undecaprenyl diphosphate (UPP). Confers resistance to bacitracin. This Oleidesulfovibrio alaskensis (strain ATCC BAA-1058 / DSM 17464 / G20) (Desulfovibrio alaskensis) protein is Undecaprenyl-diphosphatase.